The primary structure comprises 456 residues: TGACG-sequence-specific DNA-binding protein TGA-2.1 (456 aa).

Disordered regions lie at residues Met1–Arg41 and Ser115–Leu170. Polar residues-rich tracts occupy residues Gly9–Arg41 and Gly125–Asp141. Residues Asp158–Thr169 are compositionally biased toward basic and acidic residues. The bZIP domain occupies Asp166 to Gly229. The stretch at Gln167–Asn220 forms a coiled coil. Positions Lys168 to Lys188 are basic motif. The interval Leu194 to Leu208 is leucine-zipper. Residues Pro233 to Arg450 form the DOG1 domain.

It belongs to the bZIP family. Can form heterodimer with TGA2.2.

The protein localises to the nucleus. Functionally, transcriptional activator that binds specifically to the DNA sequence 5'-TGACG-3'. Recognizes ocs elements like the as-1 motif of the cauliflower mosaic virus 35S promoter. Binding to the as-1-like cis elements mediate auxin- and salicylic acid-inducible transcription. This chain is TGACG-sequence-specific DNA-binding protein TGA-2.1 (TGA21), found in Nicotiana tabacum (Common tobacco).